Here is a 789-residue protein sequence, read N- to C-terminus: Tax1-binding protein 1 (789 aa).

3 positions are modified to phosphoserine: Ser124, Ser138, and Ser225. Positions 144–599 (TTKAGLLELK…LKRSLENPAE (456 aa)) form a coiled coil. Residues 320–420 (EEIGRLQLCL…ELKLNAMKKD (101 aa)) form an oligomerization region. Polar residues predominate over residues 481 to 502 (TGNQQKVNDASVNTDPATSAST). Residues 481 to 508 (TGNQQKVNDASVNTDPATSASTVDVKPS) are disordered. Ser593 is subject to Phosphoserine; by IKKA. Ser609 is subject to Phosphoserine. The tract at residues 639 to 660 (YASQETRDGADGAFYPDEIQRP) is disordered. Ser666 is modified (phosphoserine; by IKKA). Positions 678 to 712 (PARNFSRPDGLEDSEDSKEDENVPTAPDPPSQHLR) are disordered. UBZ1-type zinc fingers lie at residues 727–753 (HKKCPLCELMFPPNYDQSKFEEHVESH) and 754–780 (WKVCPMCSEQFPPDYDQQVFERHVQTH). Positions 730, 733, 749, 753, 757, 760, 776, and 780 each coordinate Zn(2+).

In terms of assembly, homooligomer. Interacts with TNFAIP3. Interacts with STARD13. Interacts with MYO6. Interacts with TOM1; the interaction is indirect and is mediated by MYO6, which acts as a bridge between TOM1 and TAX1BP1. Interacts with MAVS; this interaction induces MAVS polyubiquitination. Interacts with TNIP1. Interacts with TRAF6; this interaction mediates deubiquitination of TRAF6 and inhibition of NF-kappa-B activation. Interacts with RIPK1; this interaction negatively regulates RIPK1 ubiquitination. Interacts with NBR1. Interacts with TBK1. Interacts with RB1CC1. Interacts with SQSTM1. Interacts with AZI2. Interacts with TICAM1 and TRIM32; these interactions target TICAM1 to TAX1BP1-mediated selective autophagic degradation. As to quaternary structure, (Microbial infection) Interacts with the HTLV-1 protein Tax. (Microbial infection) Interacts with Respiratory syncytial virus protein N; this interaction may promote viral growth by inhibiting the innate immune response. In terms of assembly, (Microbial infection) Interacts with Lassa virus protein Z. As to quaternary structure, (Microbial infection) Interacts with Mopeia virus protein Z. Phosphorylated in the C-terminal region by CHUK/IKKA leading to NF-kappa-B signaling down-regulation. In terms of tissue distribution, expressed in all tissues tested.

The protein resides in the cytoplasm. The protein localises to the mitochondrion. It localises to the preautophagosomal structure. It is found in the cytoplasmic vesicle. Its subcellular location is the autophagosome. Its function is as follows. Ubiquitin-binding adapter that participates in inflammatory, antiviral and innate immune processes as well as selective autophagy regulation. Plays a key role in the negative regulation of NF-kappa-B and IRF3 signalings by acting as an adapter for the ubiquitin-editing enzyme A20/TNFAIP3 to bind and inactivate its substrates. Disrupts the interactions between the E3 ubiquitin ligase TRAF3 and TBK1/IKBKE to attenuate 'Lys63'-linked polyubiquitination of TBK1 and thereby IFN-beta production. Also recruits A20/TNFAIP3 to ubiquitinated signaling proteins TRAF6 and RIPK1, leading to their deubiquitination and disruption of IL-1 and TNF-induced NF-kappa-B signaling pathways. Inhibits virus-induced apoptosis by inducing the 'Lys-48'-linked polyubiquitination and degradation of MAVS via recruitment of the E3 ligase ITCH, thereby attenuating MAVS-mediated apoptosis signaling. As a macroautophagy/autophagy receptor, facilitates the xenophagic clearance of pathogenic bacteria such as Salmonella typhimurium and Mycobacterium tuberculosis. Upon NBR1 recruitment to the SQSTM1-ubiquitin condensates, acts as the major recruiter of RB1CC1 to these ubiquitin condensates to promote their autophagic degradation. Mediates the autophagic degradation of other substrates including TICAM1. This Homo sapiens (Human) protein is Tax1-binding protein 1 (TAX1BP1).